The sequence spans 94 residues: MEYNDILIAPVLTEKSTELREQGKYVFKVAPKATKIQIKEAVRRLFNVKVTDCTVVNVRGKTKRLRYKEGKTSSWKKATVKLAKGETIKIFEGA.

Belongs to the universal ribosomal protein uL23 family. In terms of assembly, part of the 50S ribosomal subunit. Contacts protein L29, and trigger factor when it is bound to the ribosome.

Its function is as follows. One of the early assembly proteins it binds 23S rRNA. One of the proteins that surrounds the polypeptide exit tunnel on the outside of the ribosome. Forms the main docking site for trigger factor binding to the ribosome. This Treponema denticola (strain ATCC 35405 / DSM 14222 / CIP 103919 / JCM 8153 / KCTC 15104) protein is Large ribosomal subunit protein uL23.